Here is a 692-residue protein sequence, read N- to C-terminus: Pentatricopeptide repeat-containing protein At2g04860 (692 aa).

PPR repeat units follow at residues 12-46 (DLSYFHSLLKSCIHGEISSSPITIFRDLLRSSLTP), 47-83 (NHFTMSIFLQATTTSFNSFKLQVEQVQTHLTKSGLDR), 84-114 (FVYVKTSLLNLYLKKGCVTSAQMLFDEMPER), 115-149 (DTVVWNALICGYSRNGYECDAWKLFIVMLQQGFSP), 150-184 (SATTLVNLLPFCGQCGFVSQGRSVHGVAAKSGLEL), 185-215 (DSQVKNALISFYSKCAELGSAEVLFREMKDK), 216-250 (STVSWNTMIGAYSQSGLQEEAITVFKNMFEKNVEI), 280-314 (DISVVTSLVCAYSRCGCLVSAERLYASAKQDSIVG), 316-345 (TSIVSCYAEKGDMDIAVVYFSKTRQLCMKI), 346-380 (DAVALVGILHGCKKSSHIDIGMSLHGYAIKSGLCT), 381-411 (KTLVVNGLITMYSKFDDVETVLFLFEQLQET), 412-447 (PLISWNSVISGCVQSGRASTAFEVFHQMMLTGGLLP), 448-482 (DAITIASLLAGCSQLCCLNLGKELHGYTLRNNFEN), 483-513 (ENFVCTALIDMYAKCGNEVQAESVFKSIKAP), 514-548 (CTATWNSMISGYSLSGLQHRALSCYLEMREKGLKP), 549-584 (DEITFLGVLSACNHGGFVDEGKICFRAMIKEFGISP), and 585-615 (TLQHYALMVGLLGRACLFTEALYLIWKMDIK). The type E motif; degenerate stretch occupies residues 620-692 (VWGALLSACI…YDGYLGVSQI (73 aa)).

This sequence belongs to the PPR family. PCMP-E subfamily.

This chain is Pentatricopeptide repeat-containing protein At2g04860 (PCMP-E74), found in Arabidopsis thaliana (Mouse-ear cress).